A 652-amino-acid polypeptide reads, in one-letter code: ATP-dependent zinc metalloprotease FtsH (652 aa).

At 1–11 (MKKQNNGLIKN) the chain is on the cytoplasmic side. A helical transmembrane segment spans residues 12–32 (PFLWLLFIFFLVTGFQYFYSG). At 33–131 (NNSGGSQQIN…EVTVKHESSS (99 aa)) the chain is on the extracellular side. The chain crosses the membrane as a helical span at residues 132-152 (GIWINLLVSIVPFGILFFFLF). Residues 153–652 (SMMGNMGGGN…EVKSKMNDEK (500 aa)) are Cytoplasmic-facing. 227 to 234 (GPPGTGKT) serves as a coordination point for ATP. Histidine 449 contacts Zn(2+). Glutamate 450 is an active-site residue. 2 residues coordinate Zn(2+): histidine 453 and aspartate 525. Positions 628–652 (MPEAVEEESHALSYDEVKSKMNDEK) are disordered. Basic and acidic residues predominate over residues 634–652 (EESHALSYDEVKSKMNDEK).

In the central section; belongs to the AAA ATPase family. This sequence in the C-terminal section; belongs to the peptidase M41 family. Homohexamer. It depends on Zn(2+) as a cofactor.

The protein localises to the cell membrane. In terms of biological role, acts as a processive, ATP-dependent zinc metallopeptidase for both cytoplasmic and membrane proteins. Plays a role in the quality control of integral membrane proteins. This is ATP-dependent zinc metalloprotease FtsH from Streptococcus pneumoniae (strain ATCC BAA-255 / R6).